The chain runs to 230 residues: Large ribosomal subunit protein uL1 (230 aa).

The protein belongs to the universal ribosomal protein uL1 family. In terms of assembly, part of the 50S ribosomal subunit.

In terms of biological role, binds directly to 23S rRNA. The L1 stalk is quite mobile in the ribosome, and is involved in E site tRNA release. Its function is as follows. Protein L1 is also a translational repressor protein, it controls the translation of the L11 operon by binding to its mRNA. In Caldicellulosiruptor bescii (strain ATCC BAA-1888 / DSM 6725 / KCTC 15123 / Z-1320) (Anaerocellum thermophilum), this protein is Large ribosomal subunit protein uL1.